Consider the following 101-residue polypeptide: ATP synthase subunit c (101 aa).

The next 2 helical transmembrane spans lie at 31–51 and 81–101; these read AFAY…GAGQ and AISE…IFVG.

This sequence belongs to the ATPase C chain family. In terms of assembly, F-type ATPases have 2 components, F(1) - the catalytic core - and F(0) - the membrane proton channel. F(1) has five subunits: alpha(3), beta(3), gamma(1), delta(1), epsilon(1). F(0) has three main subunits: a(1), b(2) and c(10-14). The alpha and beta chains form an alternating ring which encloses part of the gamma chain. F(1) is attached to F(0) by a central stalk formed by the gamma and epsilon chains, while a peripheral stalk is formed by the delta and b chains.

The protein localises to the cell membrane. Its function is as follows. F(1)F(0) ATP synthase produces ATP from ADP in the presence of a proton or sodium gradient. F-type ATPases consist of two structural domains, F(1) containing the extramembraneous catalytic core and F(0) containing the membrane proton channel, linked together by a central stalk and a peripheral stalk. During catalysis, ATP synthesis in the catalytic domain of F(1) is coupled via a rotary mechanism of the central stalk subunits to proton translocation. In terms of biological role, key component of the F(0) channel; it plays a direct role in translocation across the membrane. A homomeric c-ring of between 10-14 subunits forms the central stalk rotor element with the F(1) delta and epsilon subunits. The protein is ATP synthase subunit c of Mesomycoplasma hyopneumoniae (strain J / ATCC 25934 / NCTC 10110) (Mycoplasma hyopneumoniae).